The primary structure comprises 124 residues: U12-barytoxin-Tl1a (124 aa).

The N-terminal stretch at methionine 1–alanine 20 is a signal peptide. The propeptide occupies aspartate 21–arginine 78. 3 disulfide bridges follow: cysteine 79–cysteine 99, cysteine 86–cysteine 104, and cysteine 98–cysteine 118.

This sequence belongs to the neurotoxin 14 (magi-1) family. 04 (ICK-6) subfamily. In terms of tissue distribution, expressed by the venom gland.

Its subcellular location is the secreted. In terms of biological role, ion channel inhibitor. This chain is U12-barytoxin-Tl1a, found in Trittame loki (Brush-footed trapdoor spider).